Here is a 1153-residue protein sequence, read N- to C-terminus: Stress response protein nst1 (1153 aa).

Disordered stretches follow at residues 1 to 212, 288 to 364, 421 to 467, and 507 to 941; these read MVPA…TSTQ, QGSF…DEET, ESLH…EQRM, and MEEE…TQRD. Over residues 11 to 30 the composition is skewed to low complexity; sequence SSSTMPNSSSTTAHSAPTTN. The segment covering 53 to 63 has biased composition (basic residues); sequence NRKKQKRRQKQ. Residues 64-73 show a composition bias toward low complexity; the sequence is AARLAERQLA. Residues 76 to 90 are compositionally biased toward polar residues; the sequence is HVSTDDATQNGSSHT. Basic and acidic residues-rich tracts occupy residues 91–109 and 116–128; these read NPER…DHEQ and YPKD…EAHI. Over residues 129–140 the composition is skewed to polar residues; the sequence is DSQNPQGPNGTE. Residues 146 to 160 show a composition bias toward basic residues; that stretch reads TGRKSKKKKGKKGRN. A compositionally biased stretch (low complexity) spans 169–182; sequence TSTPMSTPSVSMSH. Polar residues predominate over residues 312–321; sequence GQHTRTQGQF. 2 stretches are compositionally biased toward acidic residues: residues 332–363 and 433–462; these read TEDD…EDEE and DDED…DAMT. Residues 447–658 are a coiled coil; it reads SQEEEDYEED…EQQAKKDTAK (212 aa). Basic and acidic residues-rich tracts occupy residues 507–526 and 536–674; these read MEEE…EAQK and QAKE…DQAK. Positions 721–739 are enriched in low complexity; it reads RQPSQQDSHSSSPHSQAPS. Over residues 740–769 the composition is skewed to polar residues; the sequence is TDPSQASLSPRSMPVSQSSGVASGNSQQGQ. A compositionally biased stretch (low complexity) spans 913–925; sequence PISRPSPIKRPSS. Basic and acidic residues predominate over residues 931 to 941; the sequence is QKGDDRTTQRD.

It belongs to the NST1 family.

It is found in the cytoplasm. In terms of biological role, may act as a negative regulator of salt tolerance. The chain is Stress response protein nst1 (nst1) from Aspergillus fumigatus (strain ATCC MYA-4609 / CBS 101355 / FGSC A1100 / Af293) (Neosartorya fumigata).